Consider the following 415-residue polypeptide: Histidine--tRNA ligase (415 aa).

This sequence belongs to the class-II aminoacyl-tRNA synthetase family. In terms of assembly, homodimer.

Its subcellular location is the cytoplasm. The enzyme catalyses tRNA(His) + L-histidine + ATP = L-histidyl-tRNA(His) + AMP + diphosphate + H(+). This chain is Histidine--tRNA ligase, found in Gluconobacter oxydans (strain 621H) (Gluconobacter suboxydans).